The chain runs to 31 residues: GSIPCGESCVYIPCISSLLGCSCKSKVCYKD.

Residues G1–D31 constitute a cross-link (cyclopeptide (Gly-Asp)). Cystine bridges form between C5–C21, C9–C23, and C14–C28.

Post-translationally, this is a cyclic peptide. Contains 3 disulfide bonds.

Its function is as follows. Probably participates in a plant defense mechanism (Potential). Binds to and induces leakage in phospholipd membranes, particularly ones containing 1-palmitoyl-2-oleophosphatidylethanolamine (POPE). In Melicytus chathamicus (Chatham Island mahoe), this protein is Cyclotide mech-4.